Here is a 346-residue protein sequence, read N- to C-terminus: SUMO-activating enzyme subunit 1 (346 aa).

N-acetylmethionine is present on M1. V2 carries the N-acetylvaline; in SUMO-activating enzyme subunit 1, N-terminally processed modification. The residue at position 12 (S12) is a Phosphoserine. Position 198 is an N6-acetyllysine (K198).

This sequence belongs to the ubiquitin-activating E1 family. As to quaternary structure, heterodimer of SAE1 and UBA2/SAE2. The heterodimer corresponds to the two domains that are encoded on a single polypeptide chain in ubiquitin-activating enzyme E1. Interacts with UBE2I. In terms of tissue distribution, expression level increases during S phase and drops in G2 phase (at protein level).

It localises to the nucleus. It participates in protein modification; protein sumoylation. In terms of biological role, the heterodimer acts as an E1 ligase for SUMO1, SUMO2, SUMO3, and probably SUMO4. It mediates ATP-dependent activation of SUMO proteins followed by formation of a thioester bond between a SUMO protein and a conserved active site cysteine residue on UBA2/SAE2. This Homo sapiens (Human) protein is SUMO-activating enzyme subunit 1 (SAE1).